The primary structure comprises 384 residues: S-adenosylmethionine synthase (384 aa).

Residue H15 coordinates ATP. D17 contributes to the Mg(2+) binding site. A K(+)-binding site is contributed by E43. Residues E56 and Q99 each contribute to the L-methionine site. The flexible loop stretch occupies residues 99–109 (QSPDINQGVDR). Residues 164-166 (DAK), 231-232 (RF), D240, 246-247 (RK), A263, and K267 contribute to the ATP site. Position 240 (D240) interacts with L-methionine. K271 is a binding site for L-methionine.

The protein belongs to the AdoMet synthase family. Homotetramer; dimer of dimers. The cofactor is Mg(2+). It depends on K(+) as a cofactor.

The protein localises to the cytoplasm. The catalysed reaction is L-methionine + ATP + H2O = S-adenosyl-L-methionine + phosphate + diphosphate. It participates in amino-acid biosynthesis; S-adenosyl-L-methionine biosynthesis; S-adenosyl-L-methionine from L-methionine: step 1/1. Functionally, catalyzes the formation of S-adenosylmethionine (AdoMet) from methionine and ATP. The overall synthetic reaction is composed of two sequential steps, AdoMet formation and the subsequent tripolyphosphate hydrolysis which occurs prior to release of AdoMet from the enzyme. The polypeptide is S-adenosylmethionine synthase (Shewanella piezotolerans (strain WP3 / JCM 13877)).